The primary structure comprises 1824 residues: MSAGGRDEERRKLADIIHHWNANRLDLFEISQPTEDLEFHGVMRFYFQDKAAGNFATKCIRVSSTATTQDVIETLAEKFRPDMRMLSSPKYSLYEVHVSGERRLDIDEKPLVVQLNWNKDDREGRFVLKNENDAIPPKKAQSNGPEKQEKEGVIQNFKRTLSKKEKKEKKKREKEALRQASDKDDRPFQGEDVENSRLAAEVYKDMPETSFTRTISNPEVVMKRRRQQKLEKRMQEFRSSDGRPDSGGTLRIYADSLKPNIPYKTILLSTTDPADFAVAEALEKYGLEKENPKDYCIARVMLPPGAQHSDEKGAKEIILDDDECPLQIFREWPSDKGILVFQLKRRPPDHIPKKTKKHLEGKTPKGKERADGSGYGSTLPPEKLPYLVELSPGRRNHFAYYNYHTYEDGSDSRDKPKLYRLQLSVTEVGTEKLDDNSIQLFGPGIQPHHCDLTNMDGVVTVTPRSMDAETYVEGQRISETTMLQSGMKVQFGASHVFKFVDPSQDHALAKRSVDGGLMVKGPRHKPGIVQETTFDLGGDIHSGTALPTSKSTTRLDSDRVSSASSTAERGMVKPMIRVEQQPDYRRQESRTQDASGPELILPASIEFRESSEDSFLSAIINYTNSSTVHFKLSPTYVLYMACRYVLSNQYRPDISPTERTHKVIAVVNKMVSMMEGVIQKQKNIAGALAFWMANASELLNFIKQDRDLSRITLDAQDVLAHLVQMAFKYLVHCLQSELNNYMPAFLDDPEENSLQRPKIDDVLHTLTGAMSLLRRCRVNAALTIQLFSQLFHFINMWLFNRLVTDPDSGLCSHYWGAIIRQQLGHIEAWAEKQGLELAADCHLSRIVQATTLLTMDKYAPDDIPNINSTCFKLNSLQLQALLQNYHCAPDEPFIPTDLIENVVTVAENTADELARSDGREVQLEEDPDLQLPFLLPEDGYSCDVVRNIPNGLQEFLDPLCQRGFCRLIPHTRSPGTWTIYFEGADYESHLLRENTELAQPLRKEPEIITVTLKKQNGMGLSIVAAKGAGQDKLGIYVKSVVKGGAADVDGRLAAGDQLLSVDGRSLVGLSQERAAELMTRTSSVVTLEVAKQGAIYHGLATLLNQPSPMMQRISDRRGSGKPRPKSEGFELYNNSTQNGSPESPQLPWAEYSEPKKLPGDDRLMKNRADHRSSPNVANQPPSPGGKSAYASGTTAKITSVSTGNLCTEEQTPPPRPEAYPIPTQTYTREYFTFPASKSQDRMAPPQNQWPNYEEKPHMHTDSNHSSIAIQRVTRSQEELREDKAYQLERHRIEAAMDRKSDSDMWINQSSSLDSSTSSQEHLNHSSKSVTPASTLTKSGPGRWKTPAAIPATPVAVSQPIRTDLPPPPPPPPVHYAGDFDGMSMDLPLPPPPSANQIGLPSAQVAAAERRKREEHQRWYEKEKARLEEERERKRREQERKLGQMRTQSLNPAPFSPLTAQQMKPEKPSTLQRPQETVIRELQPQQQPRTIERRDLQYITVSKEELSSGDSLSPDPWKRDAKEKLEKQQQMHIVDMLSKEIQELQSKPDRSAEESDRLRKLMLEWQFQKRLQESKQKDEDDEEEEDDDVDTMLIMQRLEAERRARLQDEERRRQQQLEEMRKREAEDRARQEEERRRQEEERTKRDAEEKRRQEEGYYSRLEAERRRQHDEAARRLLEPEAPGLCRPPLPRDYEPPSPSPAPGAPPPPPQRNASYLKTQVLSPDSLFTAKFVAYNEEEEEEDCSLAGPNSYPGSTGAAVGAHDACRDAKEKRSKSQDADSPGSSGAPENLTFKERQRLFSQGQDVSNKVKASRKLTELENELNTK.

The Ras-associating 1 domain maps to 39–133 (FHGVMRFYFQ…GRFVLKNEND (95 aa)). A disordered region spans residues 128–194 (LKNENDAIPP…DRPFQGEDVE (67 aa)). Positions 146-185 (EKQEKEGVIQNFKRTLSKKEKKEKKKREKEALRQASDKDD) form a coiled coil. Residues 160 to 172 (TLSKKEKKEKKKR) show a composition bias toward basic residues. Residues 173–189 (EKEALRQASDKDDRPFQ) are compositionally biased toward basic and acidic residues. Phosphoserine occurs at positions 216, 246, and 256. The Ras-associating 2 domain maps to 246–348 (SGGTLRIYAD…LVFQLKRRPP (103 aa)). The span at 349–371 (DHIPKKTKKHLEGKTPKGKERAD) shows a compositional bias: basic and acidic residues. A disordered region spans residues 349–378 (DHIPKKTKKHLEGKTPKGKERADGSGYGST). Ser391 and Ser424 each carry phosphoserine. The FHA domain occupies 426-492 (TEVGTEKLDD…LQSGMKVQFG (67 aa)). Phosphoserine is present on residues Ser512, Ser557, Ser562, Ser589, and Ser655. Residues 534 to 595 (FDLGGDIHSG…RQESRTQDAS (62 aa)) are disordered. Positions 580-591 (QQPDYRRQESRT) are enriched in basic and acidic residues. Positions 668 to 908 (NKMVSMMEGV…IENVVTVAEN (241 aa)) constitute a Dilute domain. In terms of domain architecture, PDZ spans 1007–1093 (IITVTLKKQN…VVTLEVAKQG (87 aa)). 9 positions are modified to phosphoserine: Ser1083, Ser1107, Ser1126, Ser1140, Ser1143, Ser1172, Ser1173, Ser1182, and Ser1199. Residues 1107-1223 (SPMMQRISDR…PRPEAYPIPT (117 aa)) form a disordered region. Over residues 1113 to 1128 (ISDRRGSGKPRPKSEG) the composition is skewed to basic and acidic residues. The segment covering 1132–1143 (YNNSTQNGSPES) has biased composition (polar residues). Basic and acidic residues predominate over residues 1152–1172 (SEPKKLPGDDRLMKNRADHRS). Residues 1190–1210 (ASGTTAKITSVSTGNLCTEEQ) show a composition bias toward polar residues. Phosphothreonine is present on residues Thr1211 and Thr1232. Disordered stretches follow at residues 1235 to 1473 (ASKS…LQRP), 1501 to 1528 (SKEE…EKQQ), and 1569 to 1824 (RLQE…LNTK). Ser1238 bears the Phosphoserine mark. Basic and acidic residues-rich tracts occupy residues 1252–1262 (YEEKPHMHTDS) and 1274–1302 (RSQE…KSDS). Ser1275 carries the post-translational modification Phosphoserine. Positions 1309-1318 (SSSLDSSTSS) are enriched in low complexity. Over residues 1325 to 1337 (SSKSVTPASTLTK) the composition is skewed to polar residues. Ser1328 is modified (phosphoserine). Residue Thr1330 is modified to Phosphothreonine. Low complexity predominate over residues 1345 to 1356 (TPAAIPATPVAV). Positions 1364 to 1373 (LPPPPPPPPV) are enriched in pro residues. Residues 1407–1441 (AERRKREEHQRWYEKEKARLEEERERKRREQERKL) show a composition bias toward basic and acidic residues. Residues 1408-1448 (ERRKREEHQRWYEKEKARLEEERERKRREQERKLGQMRTQS) are a coiled coil. Residues Ser1501 and Ser1512 each carry the phosphoserine modification. Basic and acidic residues predominate over residues 1515–1528 (PWKRDAKEKLEKQQ). The stretch at 1523-1667 (KLEKQQQMHI…SRLEAERRRQ (145 aa)) forms a coiled coil. A compositionally biased stretch (acidic residues) spans 1578–1589 (EDDEEEEDDDVD). Residues 1597–1677 (LEAERRARLQ…HDEAARRLLE (81 aa)) are compositionally biased toward basic and acidic residues. Over residues 1694–1709 (PPSPSPAPGAPPPPPQ) the composition is skewed to pro residues. Ser1696, Ser1721, Ser1774, Ser1779, and Ser1799 each carry phosphoserine. Residues 1762–1776 (DACRDAKEKRSKSQD) are compositionally biased toward basic and acidic residues. Position 1807 is an N6-acetyllysine (Lys1807). Residues 1813-1824 (KLTELENELNTK) are compositionally biased toward basic and acidic residues.

In terms of assembly, homodimer. Interacts with F-actin, nectin and NECTIN3. Essential for the association of nectin and E-cadherin. Isoform 1/s-afadin does not interact with F-actin. Interacts with ZO-1 and occludin, but probably in an indirect manner. Interacts with RIT1 and RIT2. Interacts with NRXN1 and BCR. Interacts with ADAM10; the interaction locks ADAM10 at adherens junctions following ADAM10 recruitment to adherens junctions by TSPAN33.

It is found in the cell junction. It localises to the adherens junction. Its function is as follows. Belongs to an adhesion system, probably together with the E-cadherin-catenin system, which plays a role in the organization of homotypic, interneuronal and heterotypic cell-cell adherens junctions (AJs). Nectin- and actin-filament-binding protein that connects nectin to the actin cytoskeleton. May play a key role in the organization of epithelial structures of the embryonic ectoderm. Essential for the organization of adherens junctions. The sequence is that of Afadin from Homo sapiens (Human).